We begin with the raw amino-acid sequence, 274 residues long: Large ribosomal subunit protein uL2 (274 aa).

2 disordered regions span residues 35-55 and 224-274; these read FGKKSSGGRNNHGRITTRHRG and AMNP…KLKG. The span at 45–55 shows a compositional bias: basic residues; the sequence is NHGRITTRHRG. The span at 263–274 shows a compositional bias: basic and acidic residues; the sequence is KSSDKYIKKLKG.

Belongs to the universal ribosomal protein uL2 family. As to quaternary structure, part of the 50S ribosomal subunit. Forms a bridge to the 30S subunit in the 70S ribosome.

Functionally, one of the primary rRNA binding proteins. Required for association of the 30S and 50S subunits to form the 70S ribosome, for tRNA binding and peptide bond formation. It has been suggested to have peptidyltransferase activity; this is somewhat controversial. Makes several contacts with the 16S rRNA in the 70S ribosome. This Wolbachia pipientis subsp. Culex pipiens (strain wPip) protein is Large ribosomal subunit protein uL2.